The sequence spans 270 residues: Formamidopyrimidine-DNA glycosylase (270 aa).

The active-site Schiff-base intermediate with DNA is the Pro-2. Glu-3 functions as the Proton donor in the catalytic mechanism. Lys-57 functions as the Proton donor; for beta-elimination activity in the catalytic mechanism. His-90, Arg-109, and Lys-150 together coordinate DNA. The segment at Leu-235–Lys-269 adopts an FPG-type zinc-finger fold. Arg-259 acts as the Proton donor; for delta-elimination activity in catalysis.

It belongs to the FPG family. In terms of assembly, monomer. The cofactor is Zn(2+).

The enzyme catalyses Hydrolysis of DNA containing ring-opened 7-methylguanine residues, releasing 2,6-diamino-4-hydroxy-5-(N-methyl)formamidopyrimidine.. It carries out the reaction 2'-deoxyribonucleotide-(2'-deoxyribose 5'-phosphate)-2'-deoxyribonucleotide-DNA = a 3'-end 2'-deoxyribonucleotide-(2,3-dehydro-2,3-deoxyribose 5'-phosphate)-DNA + a 5'-end 5'-phospho-2'-deoxyribonucleoside-DNA + H(+). Involved in base excision repair of DNA damaged by oxidation or by mutagenic agents. Acts as a DNA glycosylase that recognizes and removes damaged bases. Has a preference for oxidized purines, such as 7,8-dihydro-8-oxoguanine (8-oxoG). Has AP (apurinic/apyrimidinic) lyase activity and introduces nicks in the DNA strand. Cleaves the DNA backbone by beta-delta elimination to generate a single-strand break at the site of the removed base with both 3'- and 5'-phosphates. The sequence is that of Formamidopyrimidine-DNA glycosylase from Histophilus somni (strain 129Pt) (Haemophilus somnus).